Consider the following 368-residue polypeptide: Quinolinate synthase (368 aa).

The iminosuccinate site is built by H46 and S63. C110 is a binding site for [4Fe-4S] cluster. Iminosuccinate is bound by residues 141–143 (YVN) and S162. [4Fe-4S] cluster is bound at residue C230. Iminosuccinate-binding positions include 256–258 (HPE) and T273. C320 lines the [4Fe-4S] cluster pocket.

It belongs to the quinolinate synthase family. Type 3 subfamily. [4Fe-4S] cluster is required as a cofactor.

The protein localises to the cytoplasm. It catalyses the reaction iminosuccinate + dihydroxyacetone phosphate = quinolinate + phosphate + 2 H2O + H(+). It participates in cofactor biosynthesis; NAD(+) biosynthesis; quinolinate from iminoaspartate: step 1/1. Functionally, catalyzes the condensation of iminoaspartate with dihydroxyacetone phosphate to form quinolinate. The sequence is that of Quinolinate synthase from Bacillus cereus (strain Q1).